The following is a 1199-amino-acid chain: Putative mitoferrin (1199 aa).

A helical membrane pass occupies residues 32-52; it reads VPLWQHIFCGSIAGLMEHVFM. N92, N171, N208, N268, N326, N353, N443, N499, N539, N649, N708, N715, and N723 each carry an N-linked (GlcNAc...) asparagine glycan. The helical transmembrane segment at 730-750 threads the bilayer; sequence GVNVVVLGCIPAHALYFSTFE. N-linked (GlcNAc...) asparagine glycans are attached at residues N763 and N772. The stretch at 792-873 is one Solcar 1 repeat; the sequence is LNYFSIAVSG…ICTNEKMKKI (82 aa). The next 2 membrane-spanning stretches (helical) occupy residues 795-815 and 845-865; these read FSIA…ITPI and LYLS…IMIC. N914, N922, N965, N1013, N1022, N1041, and N1056 each carry an N-linked (GlcNAc...) asparagine glycan. One copy of the Solcar 2 repeat lies at 1109–1191; the sequence is SYFVCAGIGG…WGTYETMKRF (83 aa). Residues 1111–1131 traverse the membrane as a helical segment; sequence FVCAGIGGGIAAVLTNPLDVI.

Belongs to the mitochondrial carrier (TC 2.A.29) family.

It localises to the mitochondrion membrane. Its function is as follows. Putative iron transporter. This is Putative mitoferrin from Plasmodium falciparum (isolate 3D7).